The chain runs to 419 residues: Glutamate dehydrogenase (419 aa).

Residue Lys105 is part of the active site. 219–225 (GYGNAGY) is a binding site for NAD(+).

The protein belongs to the Glu/Leu/Phe/Val dehydrogenases family. As to quaternary structure, homohexamer.

Its subcellular location is the cytoplasm. The catalysed reaction is L-glutamate + NAD(+) + H2O = 2-oxoglutarate + NH4(+) + NADH + H(+). It catalyses the reaction L-glutamate + NADP(+) + H2O = 2-oxoglutarate + NH4(+) + NADPH + H(+). This chain is Glutamate dehydrogenase (gdhA), found in Thermococcus litoralis (strain ATCC 51850 / DSM 5473 / JCM 8560 / NS-C).